A 145-amino-acid chain; its full sequence is AP-2 complex subunit sigma (145 aa).

This sequence belongs to the adaptor complexes small subunit family. In terms of assembly, adaptor protein complex 2 (AP-2) is a heterotetramer composed of two large adaptins (alpha-type subunit apl3 and beta-type subunit apl1), a medium chain (mu-type subunit apm4) and a small adaptin (sigma-type subunit aps2).

It is found in the cell membrane. It localises to the membrane. Its subcellular location is the coated pit. In terms of biological role, component of the adaptor complexes which link clathrin to receptors in coated vesicles. Clathrin-associated protein complexes are believed to interact with the cytoplasmic tails of membrane proteins, leading to their selection and concentration. In Emericella nidulans (strain FGSC A4 / ATCC 38163 / CBS 112.46 / NRRL 194 / M139) (Aspergillus nidulans), this protein is AP-2 complex subunit sigma (aps2).